The following is a 64-amino-acid chain: Large ribosomal subunit protein bL35 (64 aa).

The protein belongs to the bacterial ribosomal protein bL35 family.

The chain is Large ribosomal subunit protein bL35 from Desulforudis audaxviator (strain MP104C).